The primary structure comprises 96 residues: Co-chaperonin GroES (96 aa).

Belongs to the GroES chaperonin family. As to quaternary structure, heptamer of 7 subunits arranged in a ring. Interacts with the chaperonin GroEL.

The protein resides in the cytoplasm. Together with the chaperonin GroEL, plays an essential role in assisting protein folding. The GroEL-GroES system forms a nano-cage that allows encapsulation of the non-native substrate proteins and provides a physical environment optimized to promote and accelerate protein folding. GroES binds to the apical surface of the GroEL ring, thereby capping the opening of the GroEL channel. The sequence is that of Co-chaperonin GroES from Actinobacillus pleuropneumoniae serotype 7 (strain AP76).